Here is a 454-residue protein sequence, read N- to C-terminus: Argininosuccinate lyase (454 aa).

It belongs to the lyase 1 family. Argininosuccinate lyase subfamily.

It is found in the cytoplasm. The enzyme catalyses 2-(N(omega)-L-arginino)succinate = fumarate + L-arginine. It participates in amino-acid biosynthesis; L-arginine biosynthesis; L-arginine from L-ornithine and carbamoyl phosphate: step 3/3. This chain is Argininosuccinate lyase, found in Herpetosiphon aurantiacus (strain ATCC 23779 / DSM 785 / 114-95).